The following is a 496-amino-acid chain: Sporulation-killing factor biosynthesis protein SkfC (496 aa).

The next 7 membrane-spanning stretches (helical) occupy residues 1–21 (MNSL…LLFI), 224–244 (VSGM…LVFM), 248–268 (TSII…SLTL), 291–311 (LLGI…VFIC), 331–351 (IVQI…TSLL), 399–419 (LLMI…IIVS), and 443–463 (FIFG…CVLV).

The protein localises to the membrane. Required for production of the bacteriocin SkfA. This chain is Sporulation-killing factor biosynthesis protein SkfC, found in Bacillus subtilis (strain 168).